We begin with the raw amino-acid sequence, 267 residues long: Putative ABC transporter permease protein MJ0413 (267 aa).

Helical transmembrane passes span 18–38, 48–68, 78–98, 115–135, 136–156, 188–208, and 228–248; these read VLKISLPALAVVIWELLAIYI, EAVINVLIHPFQGILGTGSLI, VISGFLLASAVAIPLGILMGY, PIPPLAWVPLSLAWFGLGEMS, MIFIIFIGAFFPILINTISGV, PSILTGLRVGAGIAWMCVVAA, and LSRMDVVIACMIIIGLIGLVL. Residues 71-252 enclose the ABC transmembrane type-1 domain; it reads TIISIKRVIS…LIGLVLDRGL (182 aa).

The protein belongs to the binding-protein-dependent transport system permease family. CysTW subfamily.

The protein resides in the cell membrane. Functionally, probably part of a binding-protein-dependent transport system. Probably responsible for the translocation of the substrate across the membrane. The polypeptide is Putative ABC transporter permease protein MJ0413 (Methanocaldococcus jannaschii (strain ATCC 43067 / DSM 2661 / JAL-1 / JCM 10045 / NBRC 100440) (Methanococcus jannaschii)).